The chain runs to 835 residues: Ribonucleoside-diphosphate reductase large subunit (835 aa).

Substrate is bound by residues serine 222, 237–238 (SC), glycine 266, 447–451 (NLCCE), and 660–664 (PSASS). Cysteine 238 and cysteine 464 form a disulfide bridge. The active-site Proton acceptor is asparagine 447. Cysteine 449 functions as the Cysteine radical intermediate in the catalytic mechanism. Glutamate 451 (proton acceptor) is an active-site residue.

Belongs to the ribonucleoside diphosphate reductase large chain family. As to quaternary structure, heterotetramer composed of a homodimer of the large subunit (R1) and a homodimer of the small subunit (R2). Larger multisubunit protein complex are also active, composed of (R1)n(R2)n.

It carries out the reaction a 2'-deoxyribonucleoside 5'-diphosphate + [thioredoxin]-disulfide + H2O = a ribonucleoside 5'-diphosphate + [thioredoxin]-dithiol. Functionally, ribonucleoside-diphosphate reductase holoenzyme provides the precursors necessary for viral DNA synthesis. Allows virus growth in non-dividing cells. Catalyzes the biosynthesis of deoxyribonucleotides from the corresponding ribonucleotides. The chain is Ribonucleoside-diphosphate reductase large subunit from Magallana gigas (Pacific oyster).